A 124-amino-acid polypeptide reads, in one-letter code: Small ribosomal subunit protein uS12 (124 aa).

D89 carries the 3-methylthioaspartic acid modification.

This sequence belongs to the universal ribosomal protein uS12 family. As to quaternary structure, part of the 30S ribosomal subunit. Contacts proteins S8 and S17. May interact with IF1 in the 30S initiation complex.

Its function is as follows. With S4 and S5 plays an important role in translational accuracy. Interacts with and stabilizes bases of the 16S rRNA that are involved in tRNA selection in the A site and with the mRNA backbone. Located at the interface of the 30S and 50S subunits, it traverses the body of the 30S subunit contacting proteins on the other side and probably holding the rRNA structure together. The combined cluster of proteins S8, S12 and S17 appears to hold together the shoulder and platform of the 30S subunit. This Shewanella frigidimarina (strain NCIMB 400) protein is Small ribosomal subunit protein uS12.